A 1173-amino-acid chain; its full sequence is Calcium-transporting ATPase 2 (1173 aa).

Residues 1 to 24 (MSRQDENSALLANNENNKPSYTGN) form a disordered region. The Cytoplasmic segment spans residues 1 to 114 (MSRQDENSAL…LQLVWAAFND (114 aa)). Positions 7 to 17 (NSALLANNENN) are enriched in low complexity. The chain crosses the membrane as a helical span at residues 115–139 (KTMQLLTVAAVVSFVLGLYELWMQP). Over 140–152 (PQYDPEGNKIKQV) the chain is Vacuolar. A helical transmembrane segment spans residues 153–173 (DWIEGVAIMIAVFVVVLVSAA). At 174–349 (NDYQKELQFA…LADNISVYGC (176 aa)) the chain is on the cytoplasmic side. A helical transmembrane segment spans residues 350-368 (VSAIILFLVLFTRYLFYII). At 369–388 (PEDGRFHDLDPAQKGSKFMN) the chain is on the vacuolar side. A helical membrane pass occupies residues 389–409 (IFITSITVIVVAVPEGLPLAV). Ca(2+) is bound by residues Val398 and Glu403. Residues 410 to 899 (TLALAFATTR…RCVSVSIKKF (490 aa)) are Cytoplasmic-facing. Residue Asp445 is the 4-aspartylphosphate intermediate of the active site. Asp445 and Thr447 together coordinate Mg(2+). Residues Thr447, Lys643, 762–764 (TGD), Arg816, and Lys822 contribute to the ATP site. Residue Asp841 participates in Mg(2+) binding. Asn844 provides a ligand contact to ATP. A helical membrane pass occupies residues 900-922 (IQFQLIVNITAVILTFVSSVASS). A Ca(2+)-binding site is contributed by Asn907. Topologically, residues 923–929 (DETSVLT) are vacuolar. Residues 930 to 950 (AVQLLWINLIMDTLAALALAT) form a helical membrane-spanning segment. 2 residues coordinate Ca(2+): Asn937 and Asp941. The Cytoplasmic segment spans residues 951–976 (DKPDPNIMDRKPRGRSTSLISVSTWK). Residues 977-998 (MILSQATLQLIVTFILHFYGPE) form a helical membrane-spanning segment. Residues 999–1010 (LFFKKHEDEITS) are Vacuolar-facing. The helical transmembrane segment at 1011–1029 (HQQQQLNAMTFNTFVWLQF) threads the bilayer. The Cytoplasmic segment spans residues 1030 to 1065 (FTMLVSRKLDEGDGISNWRGRISAANLNFFQDLGRN). A helical transmembrane segment spans residues 1066 to 1086 (YYFLTIMAIIGSCQVLIMFFG). Over 1087–1099 (GAPFSIARQTKSM) the chain is Vacuolar. The chain crosses the membrane as a helical span at residues 1100–1120 (WITAVLCGMLSLIMGVLVRIC). Over 1121–1173 (PDEVAVKVFPAAFVQRFKYVFGLEFLRKNHTGKHDDEEALLEESDSPESTAFY) the chain is Cytoplasmic.

Belongs to the cation transport ATPase (P-type) (TC 3.A.3) family.

The protein localises to the vacuole membrane. It carries out the reaction Ca(2+)(in) + ATP + H2O = Ca(2+)(out) + ADP + phosphate + H(+). Functionally, this magnesium-dependent enzyme catalyzes the hydrolysis of ATP coupled with the transport of calcium. Transports the calcium to the vacuole and participates in the control of the cytosolic free calcium. This chain is Calcium-transporting ATPase 2 (PMC1), found in Saccharomyces cerevisiae (strain ATCC 204508 / S288c) (Baker's yeast).